Here is a 313-residue protein sequence, read N- to C-terminus: Porphobilinogen deaminase (313 aa).

Position 242 is an S-(dipyrrolylmethanemethyl)cysteine (C242).

This sequence belongs to the HMBS family. In terms of assembly, monomer. Dipyrromethane is required as a cofactor.

The catalysed reaction is 4 porphobilinogen + H2O = hydroxymethylbilane + 4 NH4(+). It participates in porphyrin-containing compound metabolism; protoporphyrin-IX biosynthesis; coproporphyrinogen-III from 5-aminolevulinate: step 2/4. Its function is as follows. Tetrapolymerization of the monopyrrole PBG into the hydroxymethylbilane pre-uroporphyrinogen in several discrete steps. This Escherichia coli O6:H1 (strain CFT073 / ATCC 700928 / UPEC) protein is Porphobilinogen deaminase.